Reading from the N-terminus, the 355-residue chain is Probable dual-specificity RNA methyltransferase RlmN (355 aa).

The segment at 1-20 (MSATPVTQLTPSSQPQQPCS) is disordered. Glu107 (proton acceptor) is an active-site residue. The 229-residue stretch at 113-341 (TDKRLTVCVS…VSVRYSRGLE (229 aa)) folds into the Radical SAM core domain. Residues Cys120 and Cys346 are joined by a disulfide bond. Residues Cys127, Cys131, and Cys134 each coordinate [4Fe-4S] cluster. S-adenosyl-L-methionine contacts are provided by residues 174 to 175 (GE), Ser204, 227 to 229 (SLH), and Asn303. Cys346 functions as the S-methylcysteine intermediate in the catalytic mechanism.

The protein belongs to the radical SAM superfamily. RlmN family. [4Fe-4S] cluster serves as cofactor.

It localises to the cytoplasm. It catalyses the reaction adenosine(2503) in 23S rRNA + 2 reduced [2Fe-2S]-[ferredoxin] + 2 S-adenosyl-L-methionine = 2-methyladenosine(2503) in 23S rRNA + 5'-deoxyadenosine + L-methionine + 2 oxidized [2Fe-2S]-[ferredoxin] + S-adenosyl-L-homocysteine. The enzyme catalyses adenosine(37) in tRNA + 2 reduced [2Fe-2S]-[ferredoxin] + 2 S-adenosyl-L-methionine = 2-methyladenosine(37) in tRNA + 5'-deoxyadenosine + L-methionine + 2 oxidized [2Fe-2S]-[ferredoxin] + S-adenosyl-L-homocysteine. Specifically methylates position 2 of adenine 2503 in 23S rRNA and position 2 of adenine 37 in tRNAs. This Nostoc sp. (strain PCC 7120 / SAG 25.82 / UTEX 2576) protein is Probable dual-specificity RNA methyltransferase RlmN.